A 196-amino-acid polypeptide reads, in one-letter code: Protein hunchback (196 aa).

Disordered regions lie at residues 16 to 56, 63 to 82, and 156 to 196; these read SHHH…SHTN, LKQQ…QQPM, and LTPP…KYMA. A compositionally biased stretch (basic residues) spans 17-29; that stretch reads HHHHHHHAHHSHH. Composition is skewed to low complexity over residues 33–43 and 65–80; these read SNSNASNSPHQ and QQQQ…QQQQ. A compositionally biased stretch (basic and acidic residues) spans 177-196; the sequence is EPEKEHDLMSNSSEDMKYMA.

The protein belongs to the hunchback C2H2-type zinc-finger protein family.

The protein resides in the nucleus. Functionally, gap class segmentation protein that controls development of head structures. The sequence is that of Protein hunchback (hb) from Drosophila adunca (Fruit fly).